The chain runs to 318 residues: MTRGKPGRAGHDRRHASTGEHGLVIAAHGRHYLVERKGGGLLQCFPRGKRSECAVGDRVIFEATAVDQGVVVRVEERRNLLHRSDQFKSKQLAANIDQVLIMLGTEPGFSEDLLGRALVAAESLGITPLILLNKIDLTARLETARARLALYRALGYAVVELSVHAAPEAAHAVLAAHVAGRSSILIGQSGMGKSSLLNLLIPGVDAQTREISEKLDSGKHTTTFTRLYHLPSGWGHGGTLIDSPGFQEFGLHHLTEGMLERAFPEFRPRLTECRFYNCRHLQEPGCGILGAMAEGKIDPRRHALYAQLLHESEQQKPW.

The segment covering 1 to 16 has biased composition (basic residues); it reads MTRGKPGRAGHDRRHA. The disordered stretch occupies residues 1–21; it reads MTRGKPGRAGHDRRHASTGEH. The CP-type G domain occupies 84–249; sequence SDQFKSKQLA…LIDSPGFQEF (166 aa). GTP is bound by residues 133–136 and 187–195; these read NKID and GQSGMGKSS. C273, C278, H280, and C286 together coordinate Zn(2+).

The protein belongs to the TRAFAC class YlqF/YawG GTPase family. RsgA subfamily. In terms of assembly, monomer. Associates with 30S ribosomal subunit, binds 16S rRNA. Requires Zn(2+) as cofactor.

It is found in the cytoplasm. In terms of biological role, one of several proteins that assist in the late maturation steps of the functional core of the 30S ribosomal subunit. Helps release RbfA from mature subunits. May play a role in the assembly of ribosomal proteins into the subunit. Circularly permuted GTPase that catalyzes slow GTP hydrolysis, GTPase activity is stimulated by the 30S ribosomal subunit. This chain is Small ribosomal subunit biogenesis GTPase RsgA, found in Ralstonia nicotianae (strain ATCC BAA-1114 / GMI1000) (Ralstonia solanacearum).